Consider the following 460-residue polypeptide: 3-isopropylmalate dehydratase large subunit (460 aa).

The [4Fe-4S] cluster site is built by cysteine 341, cysteine 401, and cysteine 404.

It belongs to the aconitase/IPM isomerase family. LeuC type 1 subfamily. In terms of assembly, heterodimer of LeuC and LeuD. [4Fe-4S] cluster serves as cofactor.

It catalyses the reaction (2R,3S)-3-isopropylmalate = (2S)-2-isopropylmalate. It participates in amino-acid biosynthesis; L-leucine biosynthesis; L-leucine from 3-methyl-2-oxobutanoate: step 2/4. Its function is as follows. Catalyzes the isomerization between 2-isopropylmalate and 3-isopropylmalate, via the formation of 2-isopropylmaleate. This is 3-isopropylmalate dehydratase large subunit from Phocaeicola vulgatus (strain ATCC 8482 / DSM 1447 / JCM 5826 / CCUG 4940 / NBRC 14291 / NCTC 11154) (Bacteroides vulgatus).